A 119-amino-acid polypeptide reads, in one-letter code: Protein TusC (119 aa).

It belongs to the DsrF/TusC family. As to quaternary structure, heterohexamer, formed by a dimer of trimers. The hexameric TusBCD complex contains 2 copies each of TusB, TusC and TusD. The TusBCD complex interacts with TusE.

It localises to the cytoplasm. Functionally, part of a sulfur-relay system required for 2-thiolation of 5-methylaminomethyl-2-thiouridine (mnm(5)s(2)U) at tRNA wobble positions. The polypeptide is Protein TusC (Escherichia coli O45:K1 (strain S88 / ExPEC)).